A 540-amino-acid chain; its full sequence is Chaperonin GroEL (540 aa).

ATP contacts are provided by residues 29 to 32 (TLGP), 86 to 90 (DGTTT), Gly413, 477 to 479 (DAL), and Asp493.

It belongs to the chaperonin (HSP60) family. As to quaternary structure, forms a cylinder of 14 subunits composed of two heptameric rings stacked back-to-back. Interacts with the co-chaperonin GroES.

Its subcellular location is the cytoplasm. It catalyses the reaction ATP + H2O + a folded polypeptide = ADP + phosphate + an unfolded polypeptide.. In terms of biological role, together with its co-chaperonin GroES, plays an essential role in assisting protein folding. The GroEL-GroES system forms a nano-cage that allows encapsulation of the non-native substrate proteins and provides a physical environment optimized to promote and accelerate protein folding. The sequence is that of Chaperonin GroEL from Clostridium botulinum (strain Eklund 17B / Type B).